Reading from the N-terminus, the 388-residue chain is Succinate--CoA ligase [ADP-forming] subunit beta (388 aa).

Residues Lys-9–Leu-246 form the ATP-grasp domain. Residues Lys-46, Gly-53–Gly-55, Glu-99, Ala-102, and Glu-107 each bind ATP. Mg(2+) is bound by residues Asn-201 and Asp-215. Substrate contacts are provided by residues Asn-266 and Gly-323–Met-325.

It belongs to the succinate/malate CoA ligase beta subunit family. Heterotetramer of two alpha and two beta subunits. It depends on Mg(2+) as a cofactor.

The catalysed reaction is succinate + ATP + CoA = succinyl-CoA + ADP + phosphate. The enzyme catalyses GTP + succinate + CoA = succinyl-CoA + GDP + phosphate. The protein operates within carbohydrate metabolism; tricarboxylic acid cycle; succinate from succinyl-CoA (ligase route): step 1/1. In terms of biological role, succinyl-CoA synthetase functions in the citric acid cycle (TCA), coupling the hydrolysis of succinyl-CoA to the synthesis of either ATP or GTP and thus represents the only step of substrate-level phosphorylation in the TCA. The beta subunit provides nucleotide specificity of the enzyme and binds the substrate succinate, while the binding sites for coenzyme A and phosphate are found in the alpha subunit. The protein is Succinate--CoA ligase [ADP-forming] subunit beta of Verminephrobacter eiseniae (strain EF01-2).